The chain runs to 168 residues: ATP synthase F(1) complex subunit delta, mitochondrial (168 aa).

The transit peptide at 1 to 22 directs the protein to the mitochondrion; sequence MLPASLLRHPGLRRLMLQARTY. N6-acetyllysine; alternate is present on residues Lys-136 and Lys-165. Residues Lys-136 and Lys-165 each carry the N6-succinyllysine; alternate modification.

Belongs to the ATPase epsilon chain family. Component of the ATP synthase complex composed at least of ATP5F1A/subunit alpha, ATP5F1B/subunit beta, ATP5MC1/subunit c (homooctomer), MT-ATP6/subunit a, MT-ATP8/subunit 8, ATP5ME/subunit e, ATP5MF/subunit f, ATP5MG/subunit g, ATP5MK/subunit k, ATP5MJ/subunit j, ATP5F1C/subunit gamma, ATP5F1D/subunit delta, ATP5F1E/subunit epsilon, ATP5PF/subunit F6, ATP5PB/subunit b, ATP5PD/subunit d, ATP5PO/subunit OSCP. ATP synthase complex consists of a soluble F(1) head domain (subunits alpha(3) and beta(3)) - the catalytic core - and a membrane F(0) domain - the membrane proton channel (subunits c, a, 8, e, f, g, k and j). These two domains are linked by a central stalk (subunits gamma, delta, and epsilon) rotating inside the F1 region and a stationary peripheral stalk (subunits F6, b, d, and OSCP). Component of a complex composed at least by ATPIF1, ATP5F1A, ATP5F1B, ATP5F1C AND ATP5F1E.

The protein resides in the mitochondrion. It is found in the mitochondrion inner membrane. Its function is as follows. Subunit delta, of the mitochondrial membrane ATP synthase complex (F(1)F(0) ATP synthase or Complex V) that produces ATP from ADP in the presence of a proton gradient across the membrane which is generated by electron transport complexes of the respiratory chain. ATP synthase complex consist of a soluble F(1) head domain - the catalytic core - and a membrane F(1) domain - the membrane proton channel. These two domains are linked by a central stalk rotating inside the F(1) region and a stationary peripheral stalk. During catalysis, ATP synthesis in the catalytic domain of F(1) is coupled via a rotary mechanism of the central stalk subunits to proton translocation. In vivo, can only synthesize ATP although its ATP hydrolase activity can be activated artificially in vitro. With the central stalk subunit gamma, is essential for the biogenesis of F(1) catalytic part of the ATP synthase complex namely in the formation of F1 assembly intermediate. This is ATP synthase F(1) complex subunit delta, mitochondrial from Mus musculus (Mouse).